The sequence spans 246 residues: tRNA (guanine-N(1)-)-methyltransferase (246 aa).

S-adenosyl-L-methionine-binding positions include G117 and 137–142 (IGDYVL).

Belongs to the RNA methyltransferase TrmD family. Homodimer.

It is found in the cytoplasm. It carries out the reaction guanosine(37) in tRNA + S-adenosyl-L-methionine = N(1)-methylguanosine(37) in tRNA + S-adenosyl-L-homocysteine + H(+). Specifically methylates guanosine-37 in various tRNAs. The chain is tRNA (guanine-N(1)-)-methyltransferase from Acinetobacter baumannii (strain SDF).